The chain runs to 416 residues: 3-oxoacyl-[acyl-carrier-protein] synthase 2 (416 aa).

In terms of domain architecture, Ketosynthase family 3 (KS3) spans 6-414 (KKRVVVTGLG…GHNVTLAFKK (409 aa)). Active-site for beta-ketoacyl synthase activity residues include Cys-167, His-307, and His-344.

Belongs to the thiolase-like superfamily. Beta-ketoacyl-ACP synthases family. As to quaternary structure, homodimer.

It carries out the reaction a fatty acyl-[ACP] + malonyl-[ACP] + H(+) = a 3-oxoacyl-[ACP] + holo-[ACP] + CO2. It catalyses the reaction (9Z)-hexadecenoyl-[ACP] + malonyl-[ACP] + H(+) = 3-oxo-(11Z)-octadecenoyl-[ACP] + holo-[ACP] + CO2. Its pathway is lipid metabolism; fatty acid biosynthesis. Involved in the type II fatty acid elongation cycle. Catalyzes the elongation of a wide range of acyl-ACP by the addition of two carbons from malonyl-ACP to an acyl acceptor. Can efficiently catalyze the conversion of palmitoleoyl-ACP (cis-hexadec-9-enoyl-ACP) to cis-vaccenoyl-ACP (cis-octadec-11-enoyl-ACP), an essential step in the thermal regulation of fatty acid composition. In Synechocystis sp. (strain ATCC 27184 / PCC 6803 / Kazusa), this protein is 3-oxoacyl-[acyl-carrier-protein] synthase 2 (fabF).